The following is a 261-amino-acid chain: Mite allergen Der p 3 (261 aa).

Positions 1–18 (MIIYNILIVLLLAINTLA) are cleaved as a signal peptide. A propeptide spanning residues 19-29 (NPILPASPNAT) is cleaved from the precursor. In terms of domain architecture, Peptidase S1 spans 30–260 (IVGGEKALAG…FIDWIESKRS (231 aa)). An intrachain disulfide couples cysteine 54 to cysteine 70. Residues histidine 69 and aspartate 114 each act as charge relay system in the active site. Intrachain disulfides connect cysteine 181-cysteine 198 and cysteine 210-cysteine 236. Catalysis depends on serine 214, which acts as the Charge relay system.

It belongs to the peptidase S1 family.

The protein resides in the secreted. This Dermatophagoides pteronyssinus (European house dust mite) protein is Mite allergen Der p 3 (DERP3).